The chain runs to 528 residues: Protein arginine N-methyltransferase 3 (528 aa).

The disordered stretch occupies residues 1 to 42 (MCSLAAGNGQGAELGPEPLELSDSGDDAGWEDEDADAEPAQG). N-acetylcysteine is present on C2. Residues S22 and S24 each carry the phosphoserine modification. Acidic residues predominate over residues 23 to 37 (DSGDDAGWEDEDADA). Residues 46–69 (TPCLFCDRLFRSAEETFSHCKLEH) form a C2H2-type zinc finger. S169 bears the Phosphoserine mark. Residues 184–528 (MKQFAQDFVM…NSSTQTYSLQ (345 aa)) are mediates interaction with ALDH1A1. Positions 214–528 (DGVYFSSYGH…NSSTQTYSLQ (315 aa)) constitute an SAM-dependent MTase PRMT-type domain. Residues R236, G260, D282, S284, I310, and E311 each contribute to the S-adenosyl-L-homocysteine site. Catalysis depends on residues E326 and E335.

Belongs to the class I-like SAM-binding methyltransferase superfamily. Protein arginine N-methyltransferase family. As to quaternary structure, monomer and homodimer. Interacts with EPB41L3 (via FERM domain); the interaction is direct and inhibits the protein-arginine N-methyltransferase activity of PRMT3. Interacts with the 40S ribosomal protein RPS2. Interacts with ALDH1A1; the interaction is direct, inhibits ALDH1A1 aldehyde dehydrogenase activity and is independent of the methyltransferase activity of PRMT3. Ubiquitously expressed.

It localises to the cytoplasm. The protein localises to the cytosol. It is found in the nucleus. It carries out the reaction L-arginyl-[protein] + S-adenosyl-L-methionine = N(omega)-methyl-L-arginyl-[protein] + S-adenosyl-L-homocysteine + H(+). The enzyme catalyses L-arginyl-[protein] + 2 S-adenosyl-L-methionine = N(omega),N(omega)-dimethyl-L-arginyl-[protein] + 2 S-adenosyl-L-homocysteine + 2 H(+). Its activity is regulated as follows. Inhibited by N-ethylmaleimide and high concentrations of zinc chloride. Its function is as follows. Protein-arginine N-methyltransferase that catalyzes both the monomethylation and asymmetric dimethylation of the guanidino nitrogens of arginine residues in target proteins, and therefore falls into the group of type I methyltransferases. Catalyzes the asymmetric arginine dimethylation at multiple sites in the Arg/Gly-rich region of small ribosomal subunit protein uS5/RPS2. Also appears to methylate other ribosomal proteins. May regulate retinoic acid synthesis and signaling by inhibiting ALDH1A1 retinal dehydrogenase activity. Contributes to methylation of histone H4 'Arg-3', a specific tag for epigenetic transcriptional activation. Promotes osteogenesis. The protein is Protein arginine N-methyltransferase 3 of Rattus norvegicus (Rat).